A 120-amino-acid polypeptide reads, in one-letter code: Large ribosomal subunit protein bL17 (120 aa).

Belongs to the bacterial ribosomal protein bL17 family. Part of the 50S ribosomal subunit. Contacts protein L32.

The protein is Large ribosomal subunit protein bL17 of Halalkalibacterium halodurans (strain ATCC BAA-125 / DSM 18197 / FERM 7344 / JCM 9153 / C-125) (Bacillus halodurans).